A 388-amino-acid chain; its full sequence is Zinc finger protein ubi-d4 A (388 aa).

Positions 60–190 are disordered; the sequence is GPGSAPGQLY…AKGKGIGSAR (131 aa). 2 stretches are compositionally biased toward basic and acidic residues: residues 97–107 and 123–137; these read PDPEQMLKKEG and DPIE…RDDD. Residues 156-170 are compositionally biased toward acidic residues; sequence PDDFLDDLDDEDYEE. Residues 205–228 form a C2H2-type zinc finger; it reads YACDICGKRYKNRPGLSYHYAHSH. Residues 233-264 form a disordered region; it reads EGAGAEDKEDSQPPTPIMHRPEEQKSKKGPDG. Residues 251 to 262 show a composition bias toward basic and acidic residues; that stretch reads HRPEEQKSKKGP. PHD-type zinc fingers lie at residues 269–329 and 326–376; these read NNYC…CKCC and CKCC…CLDL.

It belongs to the requiem/DPF family.

The protein localises to the cytoplasm. The protein resides in the nucleus. Its function is as follows. May be a transcription factor required for the apoptosis response following survival factor withdrawal from myeloid cells. Might also have a role in the development and maturation of lymphoid cells. In Xenopus laevis (African clawed frog), this protein is Zinc finger protein ubi-d4 A (req-a).